A 453-amino-acid chain; its full sequence is Aldehyde dehydrogenase, dimeric NADP-preferring (453 aa).

The residue at position 2 (Ser2) is an N-acetylserine. Lys178 carries the post-translational modification N6-acetyllysine. Position 188–193 (188–193) interacts with NAD(+); the sequence is GSTGVG. Residue Lys194 is modified to N6-acetyllysine. Residues Glu210 and Cys244 contribute to the active site.

The protein belongs to the aldehyde dehydrogenase family. As to quaternary structure, homodimer. In terms of tissue distribution, high levels in stomach, esophagus and lung; low level in the liver and kidney.

The protein localises to the cytoplasm. The catalysed reaction is an aldehyde + NAD(+) + H2O = a carboxylate + NADH + 2 H(+). The enzyme catalyses octanal + NAD(+) + H2O = octanoate + NADH + 2 H(+). Its function is as follows. ALDHs play a major role in the detoxification of alcohol-derived acetaldehyde. They are involved in the metabolism of corticosteroids, biogenic amines, neurotransmitters, and lipid peroxidation. Oxidizes medium and long chain aldehydes into non-toxic fatty acids. Preferentially oxidizes aromatic aldehyde substrates. Comprises about 50 percent of corneal epithelial soluble proteins. May play a role in preventing corneal damage caused by ultraviolet light. The protein is Aldehyde dehydrogenase, dimeric NADP-preferring (ALDH3A1) of Homo sapiens (Human).